The sequence spans 415 residues: UV excision repair protein RAD23 homolog B (415 aa).

Residues 1–79 enclose the Ubiquitin-like domain; the sequence is MQVTLKTLQQ…VVVMVTKPKA (79 aa). Positions 80-175 are disordered; that stretch reads VTSAVPATTQ…STPGDSSRSN (96 aa). The segment covering 84–143 has biased composition (low complexity); it reads VPATTQQSSSPSTTTVSSSPAAAVAQAPAPTPALAPTSTPASTTPASTTASSEPAPTGAT. The residue at position 155 (threonine 155) is a Phosphothreonine. Residues serine 160 and serine 174 each carry the phosphoserine modification. Threonine 186 is modified (phosphothreonine). The region spanning 188–228 is the UBA 1 domain; it reads QSYENMVTEIMSMGYEREQVIAALRASFNNPDRAVEYLLMG. Position 199 is a phosphoserine (serine 199). Phosphotyrosine is present on tyrosine 202. Positions 274 to 317 constitute an STI1 domain; it reads HPLEFLRNQPQFQQMRQIIQQNPSLLPALLQQIGRENPQLLQQI. The tract at residues 334–355 is disordered; the sequence is EAGGQGGGGGGGGGGGGGGGGI. Residues 336 to 355 show a composition bias toward gly residues; that stretch reads GGQGGGGGGGGGGGGGGGGI. One can recognise a UBA 2 domain in the interval 370–410; that stretch reads PQEKEAIERLKALGFPEGLVIQAYFACEKNENLAANFLLQQ.

The protein belongs to the RAD23 family. As to quaternary structure, component of the XPC complex composed of XPC, RAD23B and CETN2. Interacts with NGLY1 and PSMC1. Interacts with ATXN3. Interacts with AMFR. Interacts with VCP; the interaction is indirect and mediated by NGLY1.

The protein resides in the nucleus. The protein localises to the cytoplasm. In terms of biological role, multiubiquitin chain receptor involved in modulation of proteasomal degradation. Binds to polyubiquitin chains. Proposed to be capable to bind simultaneously to the 26S proteasome and to polyubiquitinated substrates and to deliver ubiquitinated proteins to the proteasome. May play a role in endoplasmic reticulum-associated degradation (ERAD) of misfolded glycoproteins by association with PNGase and delivering deglycosylated proteins to the proteasome. Involved in global genome nucleotide excision repair (GG-NER) by acting as component of the XPC complex. Cooperatively with Cetn2 appears to stabilize Xpc. May protect Xpc from proteasomal degradation. Its function is as follows. The XPC complex is proposed to represent the first factor bound at the sites of DNA damage and together with other core recognition factors, Xpa, RPA and the TFIIH complex, is part of the pre-incision (or initial recognition) complex. The XPC complex recognizes a wide spectrum of damaged DNA characterized by distortions of the DNA helix such as single-stranded loops, mismatched bubbles or single-stranded overhangs. The orientation of XPC complex binding appears to be crucial for inducing a productive NER. XPC complex is proposed to recognize and to interact with unpaired bases on the undamaged DNA strand which is followed by recruitment of the TFIIH complex and subsequent scanning for lesions in the opposite strand in a 5'-to-3' direction by the NER machinery. Cyclobutane pyrimidine dimers (CPDs) which are formed upon UV-induced DNA damage esacpe detection by the XPC complex due to a low degree of structural perurbation. Instead they are detected by the UV-DDB complex which in turn recruits and cooperates with the XPC complex in the respective DNA repair. In vitro, the XPC:RAD23B dimer is sufficient to initiate NER; it preferentially binds to cisplatin and UV-damaged double-stranded DNA and also binds to a variety of chemically and structurally diverse DNA adducts. XPC:RAD23B contacts DNA both 5' and 3' of a cisplatin lesion with a preference for the 5' side. Xpc:Rad22b induces a bend in DNA upon binding. Xpc:Rad23b stimulates the activity of DNA glycosylases Tdg and Smug1. In Rattus norvegicus (Rat), this protein is UV excision repair protein RAD23 homolog B (Rad23b).